The following is a 48-amino-acid chain: uncharacterized protein (48 aa).

This is an uncharacterized protein from Methanocaldococcus jannaschii (strain ATCC 43067 / DSM 2661 / JAL-1 / JCM 10045 / NBRC 100440) (Methanococcus jannaschii).